A 270-amino-acid polypeptide reads, in one-letter code: MHTVWKGALSLGLLNIGIKLYSAVDENDIKFLSLHKECLTPIKYKKFAPDCTDEEVDDKDIVKAYEYAPHKYIIMDEKELSALQKAHEPRSIRIISFIQNNEIDSVLYDRSYFIGPTPGHEKSYLLLKEALERTNKLGLIHISIRKKQHLAIIRNFEDGLMLQTIHYPNEIRDITNIPNLPSNENYPIQKQELTAAINLIHHLTNPFEQELYTDEYKEALTELIENKIEEQAKTESISPAPNIINIMETLQASIEQAKIKRDNKTEKEAK.

Residues 10 to 194 (SLGLLNIGIK…NYPIQKQELT (185 aa)) form the Ku domain.

The protein belongs to the prokaryotic Ku family. Homodimer. Interacts with LigD.

In terms of biological role, with LigD forms a non-homologous end joining (NHEJ) DNA repair enzyme, which repairs dsDNA breaks with reduced fidelity. Binds linear dsDNA with 5'- and 3'- overhangs but not closed circular dsDNA nor ssDNA. Recruits and stimulates the ligase activity of LigD. The chain is Non-homologous end joining protein Ku from Bacillus thuringiensis subsp. konkukian (strain 97-27).